A 134-amino-acid chain; its full sequence is Viral interleukin-8 homolog (134 aa).

A signal peptide spans 1 to 22 (MQALLLVLVLFIVQIYLLPGNG).

It belongs to the intercrine alpha (chemokine CxC) family. Homodimer.

It is found in the secreted. Functionally, plays a role in the early phase of cytolytic infections presumably by recruiting host B or T-lymphocytes. This chain is Viral interleukin-8 homolog (MDV078), found in Gallus gallus (Chicken).